Here is a 71-residue protein sequence, read N- to C-terminus: SRY-related protein LG27 (71 aa).

Residues 1 to 68 constitute a DNA-binding region (HMG box); that stretch reads VKRPMNAFMV…KHMADYPNYK (68 aa).

Its subcellular location is the nucleus. The polypeptide is SRY-related protein LG27 (Eublepharis macularius (Leopard gecko)).